The sequence spans 483 residues: Rhamnulokinase (483 aa).

11 to 15 (ASSGR) serves as a coordination point for ATP. Substrate contacts are provided by residues Gly79 and 234–236 (HDT). Asp235 acts as the Proton acceptor in catalysis. Thr257 is an ATP binding site. Asn294 provides a ligand contact to substrate. An ATP-binding site is contributed by Gln302. A disulfide bridge connects residues Cys352 and Cys369. Residue Gly401 coordinates ATP.

The protein belongs to the rhamnulokinase family. It depends on Mg(2+) as a cofactor.

The catalysed reaction is L-rhamnulose + ATP = L-rhamnulose 1-phosphate + ADP + H(+). Its pathway is carbohydrate degradation; L-rhamnose degradation; glycerone phosphate from L-rhamnose: step 2/3. Involved in the catabolism of L-rhamnose (6-deoxy-L-mannose). Catalyzes the transfer of the gamma-phosphate group from ATP to the 1-hydroxyl group of L-rhamnulose to yield L-rhamnulose 1-phosphate. In Listeria monocytogenes serotype 4b (strain CLIP80459), this protein is Rhamnulokinase.